Here is a 166-residue protein sequence, read N- to C-terminus: Nascent polypeptide-associated complex subunit beta (166 aa).

Disordered stretches follow at residues 1-40 (MVLNQEKLAKLQAASRTGGKGTPRRKMAPKPKGPGGEDPK) and 129-166 (HAASQAAAAGTKDDDDVPDVVENFDEADKKETEVDKLD). Residues 35–100 (GGEDPKLQAA…GVDKELTELV (66 aa)) enclose the NAC-A/B domain. Residues 141 to 153 (DDDDVPDVVENFD) show a composition bias toward acidic residues. Positions 154–166 (EADKKETEVDKLD) are enriched in basic and acidic residues.

It belongs to the NAC-beta family. In terms of assembly, part of the nascent polypeptide-associated complex (NAC), consisting of EGD2 and EGD1. NAC associates with ribosomes via EGD1.

It is found in the cytoplasm. The protein resides in the nucleus. Functionally, component of the nascent polypeptide-associated complex (NAC), a dynamic component of the ribosomal exit tunnel, protecting the emerging polypeptides from interaction with other cytoplasmic proteins to ensure appropriate nascent protein targeting. The NAC complex also promotes mitochondrial protein import by enhancing productive ribosome interactions with the outer mitochondrial membrane and blocks the inappropriate interaction of ribosomes translating non-secretory nascent polypeptides with translocation sites in the membrane of the endoplasmic reticulum. EGD1 may act as a transcription factor that exert a negative effect on the expression of several genes that are transcribed by RNA polymerase II. The protein is Nascent polypeptide-associated complex subunit beta (EGD1) of Mycosarcoma maydis (Corn smut fungus).